We begin with the raw amino-acid sequence, 732 residues long: DNA-directed RNA polymerase subunit beta' (732 aa).

The Zn(2+) site is built by Cys-70, Cys-72, Cys-85, and Cys-88. Mg(2+) contacts are provided by Asp-575, Asp-577, and Asp-579.

This sequence belongs to the RNA polymerase beta' chain family. RpoC1 subfamily. In terms of assembly, in plastids the minimal PEP RNA polymerase catalytic core is composed of four subunits: alpha, beta, beta', and beta''. When a (nuclear-encoded) sigma factor is associated with the core the holoenzyme is formed, which can initiate transcription. The cofactor is Mg(2+). Zn(2+) serves as cofactor.

The protein localises to the plastid. The protein resides in the chloroplast. The enzyme catalyses RNA(n) + a ribonucleoside 5'-triphosphate = RNA(n+1) + diphosphate. DNA-dependent RNA polymerase catalyzes the transcription of DNA into RNA using the four ribonucleoside triphosphates as substrates. This Thalassiosira pseudonana (Marine diatom) protein is DNA-directed RNA polymerase subunit beta'.